A 271-amino-acid chain; its full sequence is Orotidine 5'-phosphate decarboxylase (271 aa).

The Proton donor role is filled by lysine 97.

Belongs to the OMP decarboxylase family. Type 2 subfamily.

The enzyme catalyses orotidine 5'-phosphate + H(+) = UMP + CO2. The protein operates within pyrimidine metabolism; UMP biosynthesis via de novo pathway; UMP from orotate: step 2/2. The polypeptide is Orotidine 5'-phosphate decarboxylase (Leptospira borgpetersenii serovar Hardjo-bovis (strain L550)).